We begin with the raw amino-acid sequence, 144 residues long: 3-hydroxyacyl-[acyl-carrier-protein] dehydratase FabZ (144 aa).

Histidine 51 is an active-site residue.

Belongs to the thioester dehydratase family. FabZ subfamily.

It localises to the cytoplasm. The catalysed reaction is a (3R)-hydroxyacyl-[ACP] = a (2E)-enoyl-[ACP] + H2O. Involved in unsaturated fatty acids biosynthesis. Catalyzes the dehydration of short chain beta-hydroxyacyl-ACPs and long chain saturated and unsaturated beta-hydroxyacyl-ACPs. This chain is 3-hydroxyacyl-[acyl-carrier-protein] dehydratase FabZ, found in Clostridium botulinum (strain 657 / Type Ba4).